A 644-amino-acid polypeptide reads, in one-letter code: Threonine--tRNA ligase (644 aa).

A TGS domain is found at 1–61 (MVAITLPDGN…TQDASVEIVT (61 aa)). Residues 242–533 (DHRKIGKALN…LIEHYAGWMP (292 aa)) are catalytic. Zn(2+) contacts are provided by Cys333, His384, and His510.

It belongs to the class-II aminoacyl-tRNA synthetase family. Homodimer. The cofactor is Zn(2+).

It is found in the cytoplasm. The catalysed reaction is tRNA(Thr) + L-threonine + ATP = L-threonyl-tRNA(Thr) + AMP + diphosphate + H(+). Functionally, catalyzes the attachment of threonine to tRNA(Thr) in a two-step reaction: L-threonine is first activated by ATP to form Thr-AMP and then transferred to the acceptor end of tRNA(Thr). Also edits incorrectly charged L-seryl-tRNA(Thr). The chain is Threonine--tRNA ligase from Psychrobacter sp. (strain PRwf-1).